A 328-amino-acid chain; its full sequence is Cytochrome c biogenesis protein CcsA (328 aa).

A run of 8 helical transmembrane segments spans residues 12-32 (HISF…LLLG), 45-65 (GMII…IFSG), 72-92 (LYES…VLCL), 100-120 (FNTI…SGLL), 145-165 (MILG…ILVI), 234-254 (TISL…VWAN), 263-283 (WDPK…YLHI), and 296-316 (IVAS…NLLG).

Belongs to the CcmF/CycK/Ccl1/NrfE/CcsA family. As to quaternary structure, may interact with Ccs1.

The protein resides in the plastid. The protein localises to the chloroplast thylakoid membrane. Required during biogenesis of c-type cytochromes (cytochrome c6 and cytochrome f) at the step of heme attachment. This chain is Cytochrome c biogenesis protein CcsA, found in Phaseolus vulgaris (Kidney bean).